The primary structure comprises 196 residues: Imidazole glycerol phosphate synthase subunit HisH (196 aa).

Residues 2–196 (DVVILDTGCA…AQLMKNFLEM (195 aa)) form the Glutamine amidotransferase type-1 domain. The active-site Nucleophile is Cys-77. Catalysis depends on residues His-178 and Glu-180.

As to quaternary structure, heterodimer of HisH and HisF.

It localises to the cytoplasm. It catalyses the reaction 5-[(5-phospho-1-deoxy-D-ribulos-1-ylimino)methylamino]-1-(5-phospho-beta-D-ribosyl)imidazole-4-carboxamide + L-glutamine = D-erythro-1-(imidazol-4-yl)glycerol 3-phosphate + 5-amino-1-(5-phospho-beta-D-ribosyl)imidazole-4-carboxamide + L-glutamate + H(+). The catalysed reaction is L-glutamine + H2O = L-glutamate + NH4(+). It participates in amino-acid biosynthesis; L-histidine biosynthesis; L-histidine from 5-phospho-alpha-D-ribose 1-diphosphate: step 5/9. Functionally, IGPS catalyzes the conversion of PRFAR and glutamine to IGP, AICAR and glutamate. The HisH subunit catalyzes the hydrolysis of glutamine to glutamate and ammonia as part of the synthesis of IGP and AICAR. The resulting ammonia molecule is channeled to the active site of HisF. In Yersinia pestis, this protein is Imidazole glycerol phosphate synthase subunit HisH.